The following is a 129-amino-acid chain: Histone H2A-III (129 aa).

This sequence belongs to the histone H2A family. In terms of assembly, the nucleosome is a histone octamer containing two molecules each of H2A, H2B, H3 and H4 assembled in one H3-H4 heterotetramer and two H2A-H2B heterodimers. The octamer wraps approximately 147 bp of DNA.

The protein resides in the nucleus. Its subcellular location is the chromosome. In terms of biological role, core component of nucleosome. Nucleosomes wrap and compact DNA into chromatin, limiting DNA accessibility to the cellular machineries which require DNA as a template. Histones thereby play a central role in transcription regulation, DNA repair, DNA replication and chromosomal stability. DNA accessibility is regulated via a complex set of post-translational modifications of histones, also called histone code, and nucleosome remodeling. This Volvox carteri (Green alga) protein is Histone H2A-III.